We begin with the raw amino-acid sequence, 484 residues long: Fork head protein homolog 1 (484 aa).

In terms of domain architecture, FHA spans 76 to 142; it reads VTIGRNTDSL…NGAKVNFRRI (67 aa). Residues 302–393 constitute a DNA-binding region (fork-head); sequence IKPPQSYASM…RRDFLNKWNA (92 aa).

Interacts (via FHA domain) with ECM30, GLN3, URE2, MPH1 AND FDO1. Interacts with the origin recognition complex (ORC) composed of ORC1 to ORC6.

The protein localises to the nucleus. It is found in the cytoplasm. Its subcellular location is the cytosol. Its function is as follows. Transcription factor that regulates the expression of the CLB2 cluster of genes during the G2/M phase of the mitotic cell cycle. The CLB2 cluster of genes includes mitotic regulators such as CLB1, CLB2, CDC5 and CDC20 as well as SWI5 and ACE2, transcription factors required for the subsequent temporal wave of cell cycle regulated gene expression in the M/G1 phase interval. Involved in HMRa silencing. FKH1 and FKH2 associate with the coding regions of active genes and influence, in opposing ways, transcriptional elongation and termination, and coordinate early transcription elongation and pre-mRNA processing. Both FKH1 and FKH2 play a role as regulators of lifespan in collaboration with the anaphase-promoting complex (APC), likely through combined regulation of stress response, genomic stability, and cell cycle regulation. FKH1 and FKH2 function also in controlling yeast cell morphology by preventing preudohyphal growth. Acts as a rate-limiting replication origin activator via its interaction with the origin recognition complex (ORC). Plays a transcription-independent role in recombination donor preference during mating-type switching through binding to the recombination enhancer (RE), a 700-bp cis-acting element that controls recombination along the left arm of chromosome III. This chain is Fork head protein homolog 1, found in Saccharomyces cerevisiae (strain ATCC 204508 / S288c) (Baker's yeast).